The following is a 275-amino-acid chain: Formamidopyrimidine-DNA glycosylase (275 aa).

Proline 2 serves as the catalytic Schiff-base intermediate with DNA. The active-site Proton donor is the glutamate 3. Catalysis depends on lysine 58, which acts as the Proton donor; for beta-elimination activity. DNA-binding residues include histidine 89, arginine 108, and lysine 151. The FPG-type; degenerate zinc-finger motif lies at 236 to 275 (KVYDRAGQPCERCPGPAACAGISRTVQSGRATYFCARTQK). Arginine 265 serves as the catalytic Proton donor; for delta-elimination activity.

It belongs to the FPG family. In terms of assembly, monomer. Requires Zn(2+) as cofactor.

The catalysed reaction is Hydrolysis of DNA containing ring-opened 7-methylguanine residues, releasing 2,6-diamino-4-hydroxy-5-(N-methyl)formamidopyrimidine.. The enzyme catalyses 2'-deoxyribonucleotide-(2'-deoxyribose 5'-phosphate)-2'-deoxyribonucleotide-DNA = a 3'-end 2'-deoxyribonucleotide-(2,3-dehydro-2,3-deoxyribose 5'-phosphate)-DNA + a 5'-end 5'-phospho-2'-deoxyribonucleoside-DNA + H(+). In terms of biological role, involved in base excision repair of DNA damaged by oxidation or by mutagenic agents. Acts as a DNA glycosylase that recognizes and removes damaged bases. Has a preference for oxidized purines, such as 7,8-dihydro-8-oxoguanine (8-oxoG). Has AP (apurinic/apyrimidinic) lyase activity and introduces nicks in the DNA strand. Cleaves the DNA backbone by beta-delta elimination to generate a single-strand break at the site of the removed base with both 3'- and 5'-phosphates. This is Formamidopyrimidine-DNA glycosylase from Acidiphilium cryptum (strain JF-5).